The chain runs to 202 residues: UPF0056 membrane protein PH0214 (202 aa).

6 helical membrane passes run 5-25 (ILSS…ILLV), 47-67 (IGFI…QDIF), 76-96 (VAGG…GGMV), 104-124 (ILAL…AAIT), 135-155 (IIVS…LMMI), and 174-194 (IIGL…AGGI).

This sequence belongs to the UPF0056 (MarC) family.

The protein localises to the cell membrane. The chain is UPF0056 membrane protein PH0214 from Pyrococcus horikoshii (strain ATCC 700860 / DSM 12428 / JCM 9974 / NBRC 100139 / OT-3).